A 311-amino-acid polypeptide reads, in one-letter code: Putative ABC transporter ATP-binding protein MG467 (311 aa).

In terms of domain architecture, ABC transporter spans 84–310 (ITINKMWKNV…IVSNQLVRPL (227 aa)). ATP is bound at residue 122 to 129 (GSSGSGKT).

Belongs to the ABC transporter superfamily.

This Mycoplasma genitalium (strain ATCC 33530 / DSM 19775 / NCTC 10195 / G37) (Mycoplasmoides genitalium) protein is Putative ABC transporter ATP-binding protein MG467.